A 560-amino-acid chain; its full sequence is Cytosolic purine 5'-nucleotidase (560 aa).

Asp52 serves as the catalytic Nucleophile. IMP is bound by residues Asp52 and Asp54. Mg(2+) contacts are provided by Asp52 and Asp54. The Proton donor role is filled by Asp54. 2 residues coordinate ATP: Arg144 and Asn154. IMP is bound by residues Arg202, Asp206, Lys215, Thr249, Asn250, Ser251, and Lys292. Position 351 (Asp351) interacts with Mg(2+). Position 418 is a phosphoserine (Ser418). The ATP site is built by Gln453 and Arg456. A phosphoserine mark is found at Ser502, Ser511, and Ser527. The segment at 541–560 is disordered; sequence PQEITHCHDEDDDEEEEEEE. Residues 548–560 form a required for tetramer assembly region; the sequence is HDEDDDEEEEEEE. The segment covering 550 to 560 has biased composition (acidic residues); the sequence is EDDDEEEEEEE.

Belongs to the 5'(3')-deoxyribonucleotidase family. As to quaternary structure, homotetramer. It depends on Mg(2+) as a cofactor.

The protein localises to the cytoplasm. Its subcellular location is the cytosol. The catalysed reaction is a ribonucleoside 5'-phosphate + H2O = a ribonucleoside + phosphate. It carries out the reaction a 2'-deoxyribonucleoside + a ribonucleoside 5'-phosphate = a ribonucleoside + a 2'-deoxyribonucleoside 5'-phosphate. The enzyme catalyses IMP + H2O = inosine + phosphate. It catalyses the reaction GMP + H2O = guanosine + phosphate. The catalysed reaction is dIMP + H2O = 2'-deoxyinosine + phosphate. It carries out the reaction dGMP + H2O = 2'-deoxyguanosine + phosphate. The enzyme catalyses XMP + H2O = xanthosine + phosphate. It catalyses the reaction inosine + GMP = guanosine + IMP. The catalysed reaction is dGMP + inosine = 2'-deoxyguanosine + IMP. It carries out the reaction dIMP + inosine = 2'-deoxyinosine + IMP. The enzyme catalyses inosine + UMP = uridine + IMP. It catalyses the reaction inosine + CMP = cytidine + IMP. The catalysed reaction is inosine + AMP = IMP + adenosine. Allosterically activated by various compounds including ATP, 2,3-BPG/2,3-Bisphosphoglyceric acid and Ap4A/P1,P4-bis(5'-adenosyl) tetraphosphate. Binding of an allosteric activator is a prerequisiste to magnesium and substrate binding. Inhibited by inorganic phosphate. Its function is as follows. Broad specificity cytosolic 5'-nucleotidase that catalyzes the dephosphorylation of 6-hydroxypurine nucleoside 5'-monophosphates. In addition, possesses a phosphotransferase activity by which it can transfer a phosphate from a donor nucleoside monophosphate to an acceptor nucleoside, preferably inosine, deoxyinosine and guanosine. Has the highest activities for IMP and GMP followed by dIMP, dGMP and XMP. Could also catalyze the transfer of phosphates from pyrimidine monophosphates but with lower efficiency. Through these activities regulates the purine nucleoside/nucleotide pools within the cell. The protein is Cytosolic purine 5'-nucleotidase of Bos taurus (Bovine).